Reading from the N-terminus, the 782-residue chain is MRRSLAPSQRGGQRLSSRNDFTPPLLKKNKRACQQDLEQERLRQSALRDATNTSDLPLPIRFTANTEYEMAIAKVLARKFKVPIDNYVPDYGGNRTLGVRRRIVRRPLHDPLACNALVLYHAPNYTDHERMSMEPSSVLVHVVVDPLLSNILRPHQREGVRFMYECVEGKRGNFNGCIMADEMGLGKTLQCVALVWTLLKQSAECKPTINKCIIVSPSSLVKNWEKEFTKWLHGRMHCLAMEGGSKENTVRALEQFSMNASTRLGTPVLLISYETFRIYAEILCKYEVGMVICDEGHRLKNSDNLTYQALMGLKTKRRVLLSGTPIQNDLTEYFSLVNFVNPEMLGTAADFKRNFENCILRGQNADSTDKERDRALEKTQELIKLVDQCIIRRTNQILTKYLPVKFEMVICAKLTPIQLQLYTNFLKSDQVRRSLADCKEKASLTALADITTLKKLCSHPNLICEKIAAGEKGFENSQNILPINYNPKGEINPELSGKFKLLDFMLAAIRAHGNDKVVLISNYTQTLDLFELLARKRKYGFVRLDGTMSIKKRSKVVDRFNDPESDCFLFMLSSKAGGCGLNLIGANRLFMFDPDWNPANDEQAMARVWRDGQKKPCYIYRLVASGSIEEKILQRQTHKKSLSSTIIDNNESAEKHFTRDDLKDLFSFDPDILSDTHDKLKCKRCVQNVQMMPPPDDTDCTSHLSQWYHCSNNRGLPDNILAQAWTDSKCVSFVFHHRSQSQKIEATPATETSVEAKLEPERRKRPAMPLSDDSADEDFQGF.

Positions 1 to 20 are enriched in polar residues; that stretch reads MRRSLAPSQRGGQRLSSRND. The tract at residues 1–28 is disordered; sequence MRRSLAPSQRGGQRLSSRNDFTPPLLKK. The interval 2-9 is required for chromatin remodeling, strand pairing activities and coupling of ATPase activity; sequence RRSLAPSQ. Phosphothreonine is present on T22. The 176-residue stretch at 168-343 folds into the Helicase ATP-binding domain; the sequence is EGKRGNFNGC…FSLVNFVNPE (176 aa). Residue 181-188 coordinates ATP; the sequence is DEMGLGKT. A DEGH box motif is present at residues 294–297; that stretch reads DEGH. Residues 501–658 form the Helicase C-terminal domain; sequence LLDFMLAAIR…NNESAEKHFT (158 aa). Over residues 741–753 the composition is skewed to polar residues; that stretch reads SQKIEATPATETS. Residues 741 to 782 are disordered; that stretch reads SQKIEATPATETSVEAKLEPERRKRPAMPLSDDSADEDFQGF. Over residues 773-782 the composition is skewed to acidic residues; sequence DSADEDFQGF.

Belongs to the SNF2/RAD54 helicase family. In terms of assembly, interacts (via N-terminus) with spn-A/Rad51.

Its subcellular location is the nucleus. Functionally, involved in mitotic DNA repair and meiotic recombination. Functions in the recombinational DNA repair pathway. Essential for interhomolog gene conversion (GC), but may have a less important role in intersister GC than spn-A/Rad51. In the presence of DNA, spn-A/Rad51 enhances the ATPase activity of okr/Rad54. This chain is DNA repair and recombination protein RAD54-like, found in Drosophila persimilis (Fruit fly).